We begin with the raw amino-acid sequence, 139 residues long: D-ribose pyranase (139 aa).

His-20 functions as the Proton donor in the catalytic mechanism. Residues Asp-28, His-106, and 128–130 (YAN) contribute to the substrate site.

This sequence belongs to the RbsD / FucU family. RbsD subfamily. As to quaternary structure, homodecamer.

It is found in the cytoplasm. The catalysed reaction is beta-D-ribopyranose = beta-D-ribofuranose. It functions in the pathway carbohydrate metabolism; D-ribose degradation; D-ribose 5-phosphate from beta-D-ribopyranose: step 1/2. Functionally, catalyzes the interconversion of beta-pyran and beta-furan forms of D-ribose. This is D-ribose pyranase from Actinobacillus pleuropneumoniae serotype 7 (strain AP76).